The primary structure comprises 211 residues: Thymidylate kinase (211 aa).

10–17 (GGDGVGKS) is an ATP binding site.

The protein belongs to the thymidylate kinase family.

It catalyses the reaction dTMP + ATP = dTDP + ADP. Phosphorylation of dTMP to form dTDP in both de novo and salvage pathways of dTTP synthesis. In Clavibacter michiganensis subsp. michiganensis (strain NCPPB 382), this protein is Thymidylate kinase.